We begin with the raw amino-acid sequence, 273 residues long: Diaminopimelate epimerase (273 aa).

Substrate contacts are provided by Asn-11 and Asn-60. Cys-69 (proton donor) is an active-site residue. Substrate is bound by residues 70–71 (GN), Asn-181, and 199–200 (ER). The Proton acceptor role is filled by Cys-209. 210–211 (GT) lines the substrate pocket.

It belongs to the diaminopimelate epimerase family. As to quaternary structure, homodimer.

The protein resides in the cytoplasm. The catalysed reaction is (2S,6S)-2,6-diaminopimelate = meso-2,6-diaminopimelate. The protein operates within amino-acid biosynthesis; L-lysine biosynthesis via DAP pathway; DL-2,6-diaminopimelate from LL-2,6-diaminopimelate: step 1/1. Functionally, catalyzes the stereoinversion of LL-2,6-diaminopimelate (L,L-DAP) to meso-diaminopimelate (meso-DAP), a precursor of L-lysine and an essential component of the bacterial peptidoglycan. The chain is Diaminopimelate epimerase from Helicobacter pylori (strain ATCC 700392 / 26695) (Campylobacter pylori).